Here is a 160-residue protein sequence, read N- to C-terminus: Cytochrome b6-f complex subunit 4 (160 aa).

Helical transmembrane passes span 36-56 (LLYI…GLAI), 95-115 (LLGV…PFLE), and 131-151 (TVFL…TLPI).

It belongs to the cytochrome b family. PetD subfamily. In terms of assembly, the 4 large subunits of the cytochrome b6-f complex are cytochrome b6, subunit IV (17 kDa polypeptide, petD), cytochrome f and the Rieske protein, while the 4 small subunits are petG, petL, petM and petN. The complex functions as a dimer.

The protein localises to the plastid. It is found in the chloroplast thylakoid membrane. Component of the cytochrome b6-f complex, which mediates electron transfer between photosystem II (PSII) and photosystem I (PSI), cyclic electron flow around PSI, and state transitions. This is Cytochrome b6-f complex subunit 4 from Acorus calamus (Sweet flag).